The chain runs to 128 residues: Fluoride-specific ion channel FluC (128 aa).

Helical transmembrane passes span isoleucine 5–alanine 25, leucine 35–phenylalanine 55, leucine 67–valine 87, and phenylalanine 96–leucine 116. 2 residues coordinate Na(+): glycine 75 and threonine 78.

Belongs to the fluoride channel Fluc/FEX (TC 1.A.43) family.

Its subcellular location is the cell inner membrane. It carries out the reaction fluoride(in) = fluoride(out). Na(+) is not transported, but it plays an essential structural role and its presence is essential for fluoride channel function. Its function is as follows. Fluoride-specific ion channel. Important for reducing fluoride concentration in the cell, thus reducing its toxicity. The sequence is that of Fluoride-specific ion channel FluC from Burkholderia ambifaria (strain MC40-6).